The following is a 198-amino-acid chain: 3-isopropylmalate dehydratase small subunit (198 aa).

The protein belongs to the LeuD family. LeuD type 1 subfamily. As to quaternary structure, heterodimer of LeuC and LeuD.

It carries out the reaction (2R,3S)-3-isopropylmalate = (2S)-2-isopropylmalate. It participates in amino-acid biosynthesis; L-leucine biosynthesis; L-leucine from 3-methyl-2-oxobutanoate: step 2/4. Its function is as follows. Catalyzes the isomerization between 2-isopropylmalate and 3-isopropylmalate, via the formation of 2-isopropylmaleate. This chain is 3-isopropylmalate dehydratase small subunit, found in Corynebacterium jeikeium (strain K411).